Here is a 284-residue protein sequence, read N- to C-terminus: Tropomyosin (284 aa).

The segment at 1–39 (MDAIKKKMQAMKLEKDNAMDRADTLEQQNKEANIRAEKT) is disordered. Residues 1-284 (MDAIKKKMQA…DQTFSELSGY (284 aa)) are a coiled coil. Basic and acidic residues predominate over residues 12 to 39 (KLEKDNAMDRADTLEQQNKEANIRAEKT).

This sequence belongs to the tropomyosin family. Homodimer.

Tropomyosin, in association with the troponin complex, plays a central role in the calcium dependent regulation of muscle contraction. This Homarus americanus (American lobster) protein is Tropomyosin (TM1).